The primary structure comprises 499 residues: Glucose-6-phosphate exchanger SLC37A2 (499 aa).

A helical membrane pass occupies residues 21-40 (YRGFIIVMTFLFYTCYHLSR). N53, N62, and N66 each carry an N-linked (GlcNAc...) asparagine glycan. Helical transmembrane passes span 86–106 (GSLD…SGIF), 116–136 (LSGG…GYYW), 143–163 (YYIL…PAVV), 187–207 (AVGN…AWGL), 208–228 (SFIV…FFLV), 302–322 (LCLL…PLYI), 334–354 (GDLS…AGGI), 362–382 (AITC…YNYF), 391–411 (IAML…ITTA), 434–454 (AIID…AGVL), and 458–478 (GWNY…LLLA).

Belongs to the major facilitator superfamily. Organophosphate:Pi antiporter (OPA) (TC 2.A.1.4) family.

The protein resides in the endoplasmic reticulum membrane. The catalysed reaction is D-glucose 6-phosphate(in) + phosphate(out) = D-glucose 6-phosphate(out) + phosphate(in). In terms of biological role, inorganic phosphate and glucose-6-phosphate antiporter. May transport cytoplasmic glucose-6-phosphate into the lumen of the endoplasmic reticulum and translocate inorganic phosphate into the opposite direction. The chain is Glucose-6-phosphate exchanger SLC37A2 from Xenopus laevis (African clawed frog).